Consider the following 360-residue polypeptide: Complement control protein homolog (360 aa).

A signal peptide spans 1 to 20; sequence MYTLHYICLVLSCVIYFVWT. 4 Sushi domains span residues 21–81, 82–144, 145–207, and 208–266; these read LSCP…KCQK, KKCS…ICDI, KKCK…KCEF, and IFCK…ECMK. Cystine bridges form between C23–C68, C54–C79, C84–C125, C111–C142, C147–C191, C175–C205, C210–C252, and C238–C264. N-linked (GlcNAc...) asparagine; by host glycosylation is found at N36, N39, N46, and N72. The N-linked (GlcNAc...) asparagine; by host glycan is linked to N155. A glycan (N-linked (GlcNAc...) asparagine; by host) is linked at N294. A helical transmembrane segment spans residues 328-350; it reads GVLVIILTTSFIIIGIILTGVCL.

Belongs to the receptors of complement activation (RCA) family.

The protein localises to the membrane. It localises to the secreted. This Saimiriine herpesvirus 2 (strain 11) (SaHV-2) protein is Complement control protein homolog (4).